Reading from the N-terminus, the 51-residue chain is Protein 1.4 (51 aa).

The signal sequence occupies residues 1–23 (MFKKVGKFLAALAAILTLAYILA). The helical transmembrane segment at 28-48 (VALVVVGACYLAAVCACVWSI) threads the bilayer.

The protein resides in the host membrane. This Escherichia coli (Bacteriophage T7) protein is Protein 1.4.